Here is a 419-residue protein sequence, read N- to C-terminus: UDP-N-acetylglucosamine 1-carboxyvinyltransferase 2 (419 aa).

22 to 23 is a binding site for phosphoenolpyruvate; the sequence is KN. Arg92 is a UDP-N-acetyl-alpha-D-glucosamine binding site. Cys116 acts as the Proton donor in catalysis. 2-(S-cysteinyl)pyruvic acid O-phosphothioketal is present on Cys116. Residues 121–125, Asp306, and Ile328 each bind UDP-N-acetyl-alpha-D-glucosamine; that span reads RPIDL.

The protein belongs to the EPSP synthase family. MurA subfamily.

It is found in the cytoplasm. The enzyme catalyses phosphoenolpyruvate + UDP-N-acetyl-alpha-D-glucosamine = UDP-N-acetyl-3-O-(1-carboxyvinyl)-alpha-D-glucosamine + phosphate. Its pathway is cell wall biogenesis; peptidoglycan biosynthesis. Its function is as follows. Cell wall formation. Adds enolpyruvyl to UDP-N-acetylglucosamine. The protein is UDP-N-acetylglucosamine 1-carboxyvinyltransferase 2 of Streptococcus mutans serotype c (strain ATCC 700610 / UA159).